A 648-amino-acid chain; its full sequence is MEGAGYRVVFEKGGVYLHTSAKKYQDRDSLIAGVIRVVEKDNDVLLHWAPVEEAGDSTQILFSKKDSSGGDSCASEEEPTFDPGYEPDWAVISTVRPQLCHSEPTRGAEPSCPQGSWAFSVSLGELKSIRRSKPGLSWAYLVLVTQAGGSLPALHFHRGGTRALLRVLSRYLLLASSPQDSRLYLVFPHDSSALSNSFHHLQLFDQDSSNVVSRFLQDPYSTTFSSFSRVTNFFRGALQPQPEGAASDLPPPPDDEPEPGFEVISCVELGPRPTVERGPPVTEEEWARHVGPEGRLQQVPELKNRIFSGGLSPSLRREAWKFLLGYLSWEGTAEEHKAHIRKKTDEYFRMKLQWKSVSPEQERRNSLLHGYRSLIERDVSRTDRTNKFYEGPENPGLGLLNDILLTYCMYHFDLGYVQGMSDLLSPILYVIQNEVDAFWCFCGFMELVQGNFEESQETMKRQLGRLLLLLRVLDPLLCDFLDSQDSGSLCFCFRWLLIWFKREFPFPDVLRLWEVLWTGLPGPNLHLLVACAILDMERDTLMLSGFGSNEILKHINELTMKLSVEDVLTRAEALHRQLTACPELPHNVQEILGLAPPAEPHSPSPTASPLPLSPTRAPPTPPPSTDTAPQPDSSLEILPEEEDEGADS.

The interval Asp218–Gly309 is required for interaction with OPTN. Residues Pro240 to Pro259 form a disordered region. The Rab-GAP TBC domain maps to Gly310–Leu520. Residues Leu594–Ser648 form a disordered region. Over residues Pro597 to Ser624 the composition is skewed to pro residues. Phosphoserine occurs at positions 602 and 604. At Thr606 the chain carries Phosphothreonine. Phosphoserine is present on Ser608. Residue Thr615 is modified to Phosphothreonine. Positions Thr625–Ser634 are enriched in low complexity. A compositionally biased stretch (acidic residues) spans Leu638–Ser648.

Interacts with OPTN; this interaction mediates TBC1D17 transient association with Rab8.

It is found in the cytoplasmic vesicle. Its subcellular location is the autophagosome. The protein localises to the cytoplasm. It localises to the recycling endosome. Its function is as follows. Probable RAB GTPase-activating protein that inhibits RAB8A/B function. Reduces Rab8 recruitment to tubules emanating from the endocytic recycling compartment (ERC) and inhibits Rab8-mediated endocytic trafficking, such as that of transferrin receptor (TfR). Involved in regulation of autophagy. This chain is TBC1 domain family member 17, found in Homo sapiens (Human).